We begin with the raw amino-acid sequence, 196 residues long: MSIIPVTRVQRTTLIAILSAISFGLMLFPQVPIIPSADFLKLDFSIVPVVIGLYWLNYSASLWVILIRTLLKLILANEGVNTYLGLPVNLLVVLAFITVLKITMPNLEQYSNWQKKILPLISSTFVMTIVAIVINWFVAIPLYARFANFDIAKFIGLKNYFIGMVLPFNLIEGIIWFVVSMIILRAIQPLQRRFHS.

A run of 5 helical transmembrane segments spans residues 14 to 34 (LIAI…VPII), 46 to 66 (IVPV…WVIL), 80 to 100 (VNTY…ITVL), 120 to 140 (LISS…FVAI), and 164 to 184 (MVLP…MIIL).

The protein belongs to the prokaryotic riboflavin transporter (P-RFT) (TC 2.A.87) family. In terms of assembly, in E.coli forms a stable energy-coupling factor (ECF) transporter complex probably composed of a membrane-embedded substrate-binding protein (S component), 2 ATP-binding proteins (A components) and 2 transmembrane proteins (T component). May be able to interact with more than 1 S component at a time.

It is found in the cell membrane. Its function is as follows. Probable riboflavin-binding protein that interacts with the energy-coupling factor (ECF) ABC-transporter complex. Unlike classic ABC transporters this ECF transporter provides the energy necessary to transport a number of different substrates. The substrates themselves are bound by transmembrane, not extracytoplasmic soluble proteins and transport it into cells. The protein is Riboflavin transporter RibU (ribU) of Leuconostoc mesenteroides subsp. mesenteroides (strain ATCC 8293 / DSM 20343 / BCRC 11652 / CCM 1803 / JCM 6124 / NCDO 523 / NBRC 100496 / NCIMB 8023 / NCTC 12954 / NRRL B-1118 / 37Y).